Reading from the N-terminus, the 1578-residue chain is Pentafunctional AROM polypeptide (1578 aa).

Positions 1 to 384 (MAEPTKIKIL…YEPKASVVPN (384 aa)) are 3-dehydroquinate synthase. Residues 44–46 (DTN), 81–84 (EVSK), 114–116 (GGV), and aspartate 119 contribute to the NAD(+) site. Arginine 130 provides a ligand contact to 7-phospho-2-dehydro-3-deoxy-D-arabino-heptonate. 139 to 140 (TT) provides a ligand contact to NAD(+). Positions 146 and 152 each coordinate 7-phospho-2-dehydro-3-deoxy-D-arabino-heptonate. Residue lysine 161 coordinates NAD(+). Residue asparagine 162 participates in 7-phospho-2-dehydro-3-deoxy-D-arabino-heptonate binding. NAD(+) is bound by residues 179-182 (FLET) and asparagine 190. A Zn(2+)-binding site is contributed by glutamate 194. 7-phospho-2-dehydro-3-deoxy-D-arabino-heptonate contacts are provided by residues 194 to 197 (EVIK) and lysine 250. Glutamate 260 functions as the Proton acceptor; for 3-dehydroquinate synthase activity in the catalytic mechanism. 7-phospho-2-dehydro-3-deoxy-D-arabino-heptonate contacts are provided by residues 264 to 268 (RNLLN) and histidine 271. Histidine 271 lines the Zn(2+) pocket. The active-site Proton acceptor; for 3-dehydroquinate synthase activity is the histidine 275. Residues histidine 287 and lysine 356 each coordinate 7-phospho-2-dehydro-3-deoxy-D-arabino-heptonate. Zn(2+) is bound at residue histidine 287. An EPSP synthase region spans residues 397–842 (VHPGVEPASN…WDTLRQKFSA (446 aa)). The active-site For EPSP synthase activity is the cysteine 824. The interval 864-1055 (TASVFIIGMR…KRKKHSFFVS (192 aa)) is shikimate kinase. 871 to 878 (GMRGAGKT) provides a ligand contact to ATP. Residues 1056 to 1276 (LTLPDLRTAG…AAPGQLSATE (221 aa)) form a 3-dehydroquinase region. Histidine 1179 (proton acceptor; for 3-dehydroquinate dehydratase activity) is an active-site residue. The active-site Schiff-base intermediate with substrate; for 3-dehydroquinate dehydratase activity is the lysine 1207. Positions 1289-1578 (QKKFAVFGTP…EDARAAVLSS (290 aa)) are shikimate dehydrogenase.

It in the N-terminal section; belongs to the sugar phosphate cyclases superfamily. Dehydroquinate synthase family. This sequence in the 2nd section; belongs to the EPSP synthase family. The protein in the 3rd section; belongs to the shikimate kinase family. In the 4th section; belongs to the type-I 3-dehydroquinase family. It in the C-terminal section; belongs to the shikimate dehydrogenase family. As to quaternary structure, homodimer. Requires Zn(2+) as cofactor.

The protein localises to the cytoplasm. The catalysed reaction is 7-phospho-2-dehydro-3-deoxy-D-arabino-heptonate = 3-dehydroquinate + phosphate. It carries out the reaction 3-dehydroquinate = 3-dehydroshikimate + H2O. The enzyme catalyses shikimate + NADP(+) = 3-dehydroshikimate + NADPH + H(+). It catalyses the reaction shikimate + ATP = 3-phosphoshikimate + ADP + H(+). The catalysed reaction is 3-phosphoshikimate + phosphoenolpyruvate = 5-O-(1-carboxyvinyl)-3-phosphoshikimate + phosphate. Its pathway is metabolic intermediate biosynthesis; chorismate biosynthesis; chorismate from D-erythrose 4-phosphate and phosphoenolpyruvate: step 2/7. It functions in the pathway metabolic intermediate biosynthesis; chorismate biosynthesis; chorismate from D-erythrose 4-phosphate and phosphoenolpyruvate: step 3/7. It participates in metabolic intermediate biosynthesis; chorismate biosynthesis; chorismate from D-erythrose 4-phosphate and phosphoenolpyruvate: step 4/7. The protein operates within metabolic intermediate biosynthesis; chorismate biosynthesis; chorismate from D-erythrose 4-phosphate and phosphoenolpyruvate: step 5/7. Its pathway is metabolic intermediate biosynthesis; chorismate biosynthesis; chorismate from D-erythrose 4-phosphate and phosphoenolpyruvate: step 6/7. Functionally, the AROM polypeptide catalyzes 5 consecutive enzymatic reactions in prechorismate polyaromatic amino acid biosynthesis. The chain is Pentafunctional AROM polypeptide from Aspergillus flavus (strain ATCC 200026 / FGSC A1120 / IAM 13836 / NRRL 3357 / JCM 12722 / SRRC 167).